The sequence spans 389 residues: Brix domain-containing protein C1B9.03c (389 aa).

Positions 28-309 (SMVIRSGASE…LIKITEDAMG (282 aa)) constitute a Brix domain. The span at 323-350 (EEIKQQDNFHEQSRALKEKRKKEQDENV) shows a compositional bias: basic and acidic residues. Residues 323 to 389 (EEIKQQDNFH…EGSSAYSDTE (67 aa)) are disordered. The segment covering 351-362 (RRKRENKKRRKD) has biased composition (basic residues). Serine 377 bears the Phosphoserine mark. Over residues 379 to 389 (NEGSSAYSDTE) the composition is skewed to polar residues.

This is Brix domain-containing protein C1B9.03c from Schizosaccharomyces pombe (strain 972 / ATCC 24843) (Fission yeast).